A 1060-amino-acid chain; its full sequence is Carbamoyl phosphate synthase large chain (1060 aa).

A carboxyphosphate synthetic domain region spans residues 1 to 401 (MPKRTDIRKI…SLLKACRSLE (401 aa)). Positions 129, 169, 175, 176, 208, 210, 215, 241, 242, 243, 284, and 298 each coordinate ATP. Residues 133 to 327 (KQLMEELNQP…IAKLAAKIAV (195 aa)) enclose the ATP-grasp 1 domain. Mg(2+) contacts are provided by Gln284, Glu298, and Asn300. Residues Gln284, Glu298, and Asn300 each contribute to the Mn(2+) site. The segment at 402–546 (IGVDHIKIAD…YSTYAVENES (145 aa)) is oligomerization domain. Residues 547 to 929 (LISDKASILV…ALYKAFEAAY (383 aa)) are carbamoyl phosphate synthetic domain. An ATP-grasp 2 domain is found at 671-861 (EATLQALNIP…MAQVATKVIL (191 aa)). ATP-binding residues include Arg707, Ala746, Leu748, Glu752, Gly777, Val778, His779, Ser780, Gln820, and Glu832. Residues Gln820, Glu832, and Asn834 each coordinate Mg(2+). Mn(2+)-binding residues include Gln820, Glu832, and Asn834. The region spanning 930 to 1060 (LHMPDYGNIV…SRAFTLKVLD (131 aa)) is the MGS-like domain. The allosteric domain stretch occupies residues 930 to 1060 (LHMPDYGNIV…SRAFTLKVLD (131 aa)).

This sequence belongs to the CarB family. As to quaternary structure, composed of two chains; the small (or glutamine) chain promotes the hydrolysis of glutamine to ammonia, which is used by the large (or ammonia) chain to synthesize carbamoyl phosphate. Tetramer of heterodimers (alpha,beta)4. Mg(2+) is required as a cofactor. The cofactor is Mn(2+).

The catalysed reaction is hydrogencarbonate + L-glutamine + 2 ATP + H2O = carbamoyl phosphate + L-glutamate + 2 ADP + phosphate + 2 H(+). The enzyme catalyses hydrogencarbonate + NH4(+) + 2 ATP = carbamoyl phosphate + 2 ADP + phosphate + 2 H(+). It functions in the pathway amino-acid biosynthesis; L-arginine biosynthesis; carbamoyl phosphate from bicarbonate: step 1/1. The protein operates within pyrimidine metabolism; UMP biosynthesis via de novo pathway; (S)-dihydroorotate from bicarbonate: step 1/3. Large subunit of the glutamine-dependent carbamoyl phosphate synthetase (CPSase). CPSase catalyzes the formation of carbamoyl phosphate from the ammonia moiety of glutamine, carbonate, and phosphate donated by ATP, constituting the first step of 2 biosynthetic pathways, one leading to arginine and/or urea and the other to pyrimidine nucleotides. The large subunit (synthetase) binds the substrates ammonia (free or transferred from glutamine from the small subunit), hydrogencarbonate and ATP and carries out an ATP-coupled ligase reaction, activating hydrogencarbonate by forming carboxy phosphate which reacts with ammonia to form carbamoyl phosphate. In Streptococcus agalactiae serotype V (strain ATCC BAA-611 / 2603 V/R), this protein is Carbamoyl phosphate synthase large chain.